We begin with the raw amino-acid sequence, 533 residues long: Retinoid isomerohydrolase (533 aa).

The S-palmitoyl cysteine; in membrane form moiety is linked to residue C112. Position 117 is a phosphoserine (S117). H180 contacts Fe cation. A lipid anchor (S-palmitoyl cysteine; in membrane form) is attached at C231. 2 residues coordinate Fe cation: H241 and H313. C329 carries the S-palmitoyl cysteine; in membrane form lipid modification. H527 contacts Fe cation.

The protein belongs to the carotenoid oxygenase family. Fe(2+) serves as cofactor. In terms of processing, palmitoylation by LRAT regulates ligand binding specificity; the palmitoylated form (membrane form) specifically binds all-trans-retinyl-palmitate, while the soluble unpalmitoylated form binds all-trans-retinol (vitamin A). As to expression, retinal pigment epithelium specific.

It localises to the cytoplasm. The protein resides in the cell membrane. The protein localises to the microsome membrane. The catalysed reaction is an all-trans-retinyl ester + H2O = 11-cis-retinol + a fatty acid + H(+). It catalyses the reaction lutein = (3R,3'S)-zeaxanthin. It carries out the reaction all-trans-retinyl hexadecanoate + H2O = 11-cis-retinol + hexadecanoate + H(+). Critical isomerohydrolase in the retinoid cycle involved in regeneration of 11-cis-retinal, the chromophore of rod and cone opsins. Catalyzes the cleavage and isomerization of all-trans-retinyl fatty acid esters to 11-cis-retinol which is further oxidized by 11-cis retinol dehydrogenase to 11-cis-retinal for use as visual chromophore. Essential for the production of 11-cis retinal for both rod and cone photoreceptors. Also capable of catalyzing the isomerization of lutein to meso-zeaxanthin an eye-specific carotenoid. The soluble form binds vitamin A (all-trans-retinol), making it available for LRAT processing to all-trans-retinyl ester. The membrane form, palmitoylated by LRAT, binds all-trans-retinyl esters, making them available for IMH (isomerohydrolase) processing to all-cis-retinol. The soluble form is regenerated by transferring its palmitoyl groups onto 11-cis-retinol, a reaction catalyzed by LRAT. This chain is Retinoid isomerohydrolase (RPE65), found in Gallus gallus (Chicken).